Consider the following 215-residue polypeptide: uncharacterized protein (215 aa).

The helical transmembrane segment at 98–119 threads the bilayer; sequence AAALAVAVASLCVCTLLLTHIV.

The protein localises to the membrane. This is an uncharacterized protein from Treponema pallidum (strain Nichols).